The following is a 167-amino-acid chain: Small ribosomal subunit protein uS5 (167 aa).

In terms of domain architecture, S5 DRBM spans 12-75; it reads LQEKLIAVNR…EKARRNIVTV (64 aa).

Belongs to the universal ribosomal protein uS5 family. In terms of assembly, part of the 30S ribosomal subunit. Contacts proteins S4 and S8.

In terms of biological role, with S4 and S12 plays an important role in translational accuracy. Its function is as follows. Located at the back of the 30S subunit body where it stabilizes the conformation of the head with respect to the body. The chain is Small ribosomal subunit protein uS5 from Shewanella baltica (strain OS223).